A 522-amino-acid polypeptide reads, in one-letter code: Sorting nexin-1 (522 aa).

Positions 1-142 (MASGGGGCSA…ELEEEEQEDQ (142 aa)) are disordered. Residues serine 32 and serine 39 each carry the phosphoserine modification. Residues 35–45 (EAGDSDTEGED) show a composition bias toward acidic residues. 2 positions are modified to phosphothreonine: threonine 41 and threonine 48. A phosphoserine mark is found at serine 58 and serine 72. The span at 132–142 (EELEEEEQEDQ) shows a compositional bias: acidic residues. The PX domain maps to 143-272 (FDLTVGITDP…EFLEKEELPR (130 aa)). 3 residues coordinate a 1,2-diacyl-sn-glycero-3-phospho-(1D-myo-inositol-3-phosphate): arginine 186, serine 188, and lysine 214. A Phosphoserine modification is found at serine 188. Lysine 237 bears the N6-acetyllysine mark. Arginine 238 is a binding site for a 1,2-diacyl-sn-glycero-3-phospho-(1D-myo-inositol-3-phosphate). Residue serine 280 is modified to Phosphoserine. The tract at residues 281-298 (GAGLLKMFNKATDAVSKM) is membrane-binding amphipathic helix. The region spanning 302–522 (MNESDIWFEE…AFLPEAKAIS (221 aa)) is the BAR domain.

The protein belongs to the sorting nexin family. In terms of assembly, predominantly forms heterodimers with BAR domain-containing sorting nexins SNX5, SNX6 and SNX32; can self-associate to form homodimers. The heterodimers are proposed to self-assemble into helical arrays on the membrane to stabilize and expand local membrane curvature underlying endosomal tubule formation. Thought to be a component of the originally described retromer complex (also called SNX-BAR retromer) which is a pentamer containing the heterotrimeric retromer cargo-selective complex (CSC), also described as vacuolar protein sorting subcomplex (VPS) and a heterodimeric membrane-deforming subcomplex formed between SNX1 or SNX2 and SNX5 or SNX6 (also called SNX-BAR subcomplex); the respective CSC and SNX-BAR subcomplexes associate with low affinity. Interacts with SNX5, SNX6, SNX32, VPS26A, VPS29, VPS35, DRD5, DENND5A, KALRN, RHOG (GDP-bound form). The interaction with SNX2 is reported controversially. Interacts with DNAJC13; prevented by presence of HGS. Interacts with HGS.

It is found in the endosome membrane. The protein localises to the golgi apparatus. Its subcellular location is the trans-Golgi network membrane. The protein resides in the early endosome membrane. It localises to the cell projection. It is found in the lamellipodium. In terms of biological role, involved in several stages of intracellular trafficking. Interacts with membranes containing phosphatidylinositol 3-phosphate (PtdIns(3P)) or phosphatidylinositol 3,5-bisphosphate (PtdIns(3,5)P2). Acts in part as component of the retromer membrane-deforming SNX-BAR subcomplex. The SNX-BAR retromer mediates retrograde transport of cargo proteins from endosomes to the trans-Golgi network (TGN) and is involved in endosome-to-plasma membrane transport for cargo protein recycling. The SNX-BAR subcomplex functions to deform the donor membrane into a tubular profile called endosome-to-TGN transport carrier (ETC). Can sense membrane curvature and has in vitro vesicle-to-membrane remodeling activity. Involved in retrograde endosome-to-TGN transport of lysosomal enzyme receptors (IGF2R, M6PR and SORT1). Plays a role in targeting ligand-activated EGFR to the lysosomes for degradation after endocytosis from the cell surface and release from the Golgi. Involvement in retromer-independent endocytic trafficking of P2RY1 and lysosomal degradation of protease-activated receptor-1/F2R. Promotes KALRN- and RHOG-dependent but retromer-independent membrane remodeling such as lamellipodium formation; the function is dependent on GEF activity of KALRN. Required for endocytosis of DRD5 upon agonist stimulation but not for basal receptor trafficking. In Bos taurus (Bovine), this protein is Sorting nexin-1 (SNX1).